Consider the following 524-residue polypeptide: REH2-associated factor 1 (524 aa).

The N-terminal 22 residues, M1–R22, are a transit peptide targeting the mitochondrion. A C2H2-type 1; atypical zinc finger spans residues A48–H70. The C2H2-type 2; atypical zinc-finger motif lies at Y121–H147. The segment at F226 to H249 adopts a C2H2-type 4 zinc-finger fold. The C2H2-type 3; atypical zinc finger occupies V286–H312. 4 C2H2-type zinc fingers span residues F334–H357, W376–H399, H406–H429, and V443–H465. Positions V463–S524 are disordered. A compositionally biased stretch (low complexity) spans A479–A500.

As to quaternary structure, component of the REH2-associated complex (REH2C) composed of helicase REH2, associated factors H2F1 and H2F2, and mRNAs at various editing stages; the formation of the complex is RNA-independent. Within the complex, interacts with REH2; the interaction is direct. Interacts with various editing complexes including the RNA editing core (RECC) complex, the gRNA-binding (GRBC) complex (also known as the MRB1 complex) and the RNA editing mediator (REMC) complex.

The protein resides in the mitochondrion. Its function is as follows. Plays an important role in mitochondrial mRNA editing by promoting the assembly of the mRNA editosome. Facilitates the recruitment of mRNA to the REH2C complex and promotes the interaction between various editing complexes including REH2C, GRBC, REMC and RECC complexes. The protein is REH2-associated factor 1 of Trypanosoma brucei brucei (strain 927/4 GUTat10.1).